A 765-amino-acid polypeptide reads, in one-letter code: LPS-assembly protein LptD (765 aa).

A signal peptide spans 1-18 (MQIRYFLALSLLPQVVLA).

The protein belongs to the LptD family. In terms of assembly, component of the lipopolysaccharide transport and assembly complex. Interacts with LptE and LptA.

The protein resides in the cell outer membrane. In terms of biological role, together with LptE, is involved in the assembly of lipopolysaccharide (LPS) at the surface of the outer membrane. The polypeptide is LPS-assembly protein LptD (Shewanella sp. (strain ANA-3)).